Consider the following 320-residue polypeptide: MNKPQHHSLIILGSGPAGYTAAIYAARANLKPIMITGMEQGGQLMTTTDVDNWPGEAPGLQGPQLMERMQKHAERLDTQFIFDHINEADLNQRPFLLKGDNATYSCDALIIATGASARYLGLPSEKAYMGKGVSACATCDGFFYRGKKVAVVGGGNTAVEEALYLSHIASHVTLIHRRDKLRAEKMLSAQLIKKVEEGKVAIVWSHVIEEVLGDDQGVTGVHLKHVKEEKTQDLTIDGLFIAIGHDPNTKIFKEQLEMDEAGYLRAKSGLQGNATATNIPGVFAAGDVTDHVYRQAITAAGMGCMAALDAERYLDSLNQA.

Residue Thr36–Gln43 participates in FAD binding. Cys136 and Cys139 are oxidised to a cystine. Asp287 to Ala296 provides a ligand contact to FAD.

It belongs to the class-II pyridine nucleotide-disulfide oxidoreductase family. In terms of assembly, homodimer. Requires FAD as cofactor.

The protein resides in the cytoplasm. The catalysed reaction is [thioredoxin]-dithiol + NADP(+) = [thioredoxin]-disulfide + NADPH + H(+). This Coxiella burnetii (strain RSA 493 / Nine Mile phase I) protein is Thioredoxin reductase (trxB).